Consider the following 400-residue polypeptide: Enoyl-[acyl-carrier-protein] reductase [NADH] 2 (400 aa).

Residues 48-53 (GASSGF), 75-76 (FE), 112-113 (DA), and 141-142 (LA) contribute to the NAD(+) site. Tyrosine 227 provides a ligand contact to substrate. Tyrosine 237 serves as the catalytic Proton donor. NAD(+) is bound by residues lysine 246 and 275–277 (LVT).

The protein belongs to the TER reductase family. As to quaternary structure, monomer.

It carries out the reaction a 2,3-saturated acyl-[ACP] + NAD(+) = a (2E)-enoyl-[ACP] + NADH + H(+). It participates in lipid metabolism; fatty acid biosynthesis. Functionally, involved in the final reduction of the elongation cycle of fatty acid synthesis (FAS II). Catalyzes the reduction of a carbon-carbon double bond in an enoyl moiety that is covalently linked to an acyl carrier protein (ACP). The sequence is that of Enoyl-[acyl-carrier-protein] reductase [NADH] 2 from Photobacterium profundum (strain SS9).